The primary structure comprises 291 residues: tRNA pseudouridine synthase B (291 aa).

The active-site Nucleophile is the D41.

It belongs to the pseudouridine synthase TruB family. Type 1 subfamily.

The enzyme catalyses uridine(55) in tRNA = pseudouridine(55) in tRNA. In terms of biological role, responsible for synthesis of pseudouridine from uracil-55 in the psi GC loop of transfer RNAs. This Parasynechococcus marenigrum (strain WH8102) protein is tRNA pseudouridine synthase B.